Here is a 772-residue protein sequence, read N- to C-terminus: Endoplasmic reticulum membrane sensor NFE2L1 (772 aa).

The chain crosses the membrane as a helical; Signal-anchor for type II membrane protein span at residues 7 to 24 (YLTEGLLQFTILLSLIGV). The segment at 108-148 (DPEGSVSGSQPNSGLALESSSGLQDVTGPDNGVRESETEQG) is disordered. Residues 113-131 (VSGSQPNSGLALESSSGLQ) show a composition bias toward polar residues. Positions 191-199 (VFDYSHRQK) are cholesterol recognition/amino acid consensus (CRAC) region. The N-linked (GlcNAc...) asparagine glycan is linked to asparagine 348. The interval 379 to 383 (SPEVE) is CPD. 2 N-linked (GlcNAc...) asparagine glycosylation sites follow: asparagine 412 and asparagine 423. A disordered region spans residues 470-532 (EEEFDSDSGL…AVGYSSDSET (63 aa)). The Destruction motif motif lies at 476–480 (DSGLS). A compositionally biased stretch (low complexity) spans 476–523 (DSGLSLDSSHSPSSLSSSEGSSSSSSSSSSSSSSASSSASSSFSEEGA). Residue serine 528 is modified to Phosphoserine; by CK2. A Phosphoserine; by PKA modification is found at serine 599. In terms of domain architecture, bZIP spans 654 to 717 (LIRDIRRRGK…RQMKQKVQSL (64 aa)). The interval 656–675 (RDIRRRGKNKMAAQNCRKRK) is basic motif. The interval 682–696 (LERDVEDLQRDKARL) is leucine-zipper. The tract at residues 753-772 (RTMADQQARRQERKPKDRRK) is disordered. The Nuclear localization signal motif lies at 761-768 (RRQERKPK). Over residues 763–772 (QERKPKDRRK) the composition is skewed to basic residues.

It belongs to the bZIP family. CNC subfamily. In terms of assembly, interacts with KEAP1. Interacts (via CPD region) with FBXW7; leading to its ubiquitination and degradation. Interacts with SYVN1/HRD1; leading to its ubiquitination and degradation. Interacts (when ubiquitinated) with DDI2; leading to its cleavage. As to quaternary structure, interacts (via the bZIP domain) with small MAF protein (MAFF, MAFG or MAFK); required for binding to antioxidant response elements (AREs) on DNA. Interacts (via Destruction motif) with BTRC; leading to its ubiquitination and degradation. Interacts with CEBPB; the heterodimer represses expression of DSPP during odontoblast differentiation. Interacts with MOTS-c, a peptide produced by the mitochondrially encoded 12S rRNA MT-RNR1. Cleaved at Leu-104 by the aspartyl protease DDI2 following retrotranslocation, releasing the protein from the endoplasmic reticulum membrane and forming the transcription factor NRF1 that translocates into the nucleus. Ubiquitination is prerequisite for cleavage by aspartyl protease DDI2. Post-translationally, N-glycosylated in normal conditions, when it has a single-pass type II membrane protein topology, with the DNA-binding domain facing the endoplasmic reticulum lumen. Deglycosylated during retrotranslocation to the cytosolic side of the membrane, to have a single-pass type III membrane protein topology with the major part of the protein facing the cytosol. In terms of processing, ubiquitinated by the SCF(FBXW7) complex and SYVN1/HRD1, leading to its degradation by the proteasome. Ubiquitinated during retrotranslocation to the cytosolic side of the membrane: ubiquitination does not lead to degradation and is required for processing by the aspartyl protease DDI2 and subsequent release from the endoplasmic reticulum membrane. Phosphorylation by CK2 at Ser-528 inhibits transcription factor activity, possibly by affecting DNA-binding activity. Phosphorylation at Ser-599 is required for interaction with CEBPB. Post-translationally, ubiquitinated by the SCF(BTRC) complex in the nucleus, leading to its degradation by the proteasome.

It is found in the endoplasmic reticulum membrane. The protein localises to the nucleus. Endoplasmic reticulum membrane sensor that translocates into the nucleus in response to various stresses to act as a transcription factor. Constitutes a precursor of the transcription factor NRF1. Able to detect various cellular stresses, such as cholesterol excess, oxidative stress or proteasome inhibition. In response to stress, it is released from the endoplasmic reticulum membrane following cleavage by the protease DDI2 and translocates into the nucleus to form the transcription factor NRF1. Acts as a key sensor of cholesterol excess: in excess cholesterol conditions, the endoplasmic reticulum membrane form of the protein directly binds cholesterol via its CRAC motif, preventing cleavage and release of the transcription factor NRF1, thereby allowing expression of genes promoting cholesterol removal, such as CD36. Involved in proteasome homeostasis: in response to proteasome inhibition, it is released from the endoplasmic reticulum membrane, translocates to the nucleus and activates expression of genes encoding proteasome subunits. Its function is as follows. CNC-type bZIP family transcription factor that translocates to the nucleus and regulates expression of target genes in response to various stresses. Heterodimerizes with small-Maf proteins (MAFF, MAFG or MAFK) and binds DNA motifs including the antioxidant response elements (AREs), which regulate expression of genes involved in oxidative stress response. Activates or represses expression of target genes, depending on the context. Plays a key role in cholesterol homeostasis by acting as a sensor of cholesterol excess: in low cholesterol conditions, translocates into the nucleus and represses expression of genes involved in defense against cholesterol excess, such as CD36. In excess cholesterol conditions, the endoplasmic reticulum membrane form of the protein directly binds cholesterol via its CRAC motif, preventing cleavage and release of the transcription factor NRF1, thereby allowing expression of genes promoting cholesterol removal. Critical for redox balance in response to oxidative stress: acts by binding the AREs motifs on promoters and mediating activation of oxidative stress response genes, such as GCLC, GCLM, GSS, MT1 and MT2. Plays an essential role during fetal liver hematopoiesis: probably has a protective function against oxidative stress and is involved in lipid homeostasis in the liver. Involved in proteasome homeostasis: in response to proteasome inhibition, mediates the 'bounce-back' of proteasome subunits by translocating into the nucleus and activating expression of genes encoding proteasome subunits. Also involved in regulating glucose flux. Together with CEBPB; represses expression of DSPP during odontoblast differentiation. In response to ascorbic acid induction, activates expression of SP7/Osterix in osteoblasts. The polypeptide is Endoplasmic reticulum membrane sensor NFE2L1 (Pongo abelii (Sumatran orangutan)).